The primary structure comprises 271 residues: Aquaporin-2 (271 aa).

Over 1-11 the chain is Cytoplasmic; sequence MWELRSIAFSR. A helical transmembrane segment spans residues 12–32; sequence AVFAEFLATLLFVFFGLGSAL. The Extracellular segment spans residues 33–40; that stretch reads NWPQALPS. A helical transmembrane segment spans residues 41–59; sequence VLQIAMAFGLGIGTLVQAL. Residues 60–64 lie on the Cytoplasmic side of the membrane; that stretch reads GHISG. The discontinuously helical intramembrane region spans 65–74; it reads AHINPAVTVA. The NPA 1 motif lies at 68 to 70; sequence NPA. Residues 75-85 are Cytoplasmic-facing; it reads CLVGCHVSVLR. A helical membrane pass occupies residues 86–107; the sequence is AAFYVAAQLLGAVAGAALLHEI. At 108–127 the chain is on the extracellular side; it reads TPADIRGDLAVNALSNSTTA. A glycan (N-linked (GlcNAc...) asparagine) is linked at N123. Residues 128-148 form a helical membrane-spanning segment; that stretch reads GQAVTVELFLTLQLVLCIFAS. Residues 149–156 are Cytoplasmic-facing; the sequence is TDERRGEN. A helical transmembrane segment spans residues 157 to 176; the sequence is PGTPALSIGFSVALGHLLGI. The Extracellular segment spans residues 177–180; that stretch reads HYTG. Residues 181–193 constitute an intramembrane region (discontinuously helical); the sequence is CSMNPARSLAPAV. The short motif at 184–186 is the NPA 2 element; that stretch reads NPA. Residues 194–201 are Extracellular-facing; the sequence is VTGKFDDH. A helical transmembrane segment spans residues 202–222; it reads WVFWIGPLVGAILGSLLYNYV. The Cytoplasmic portion of the chain corresponds to 223–271; that stretch reads LFPPAKSLSERLAVLKGLEPDTDWEEREVRRRQSVELHSPQSLPRGTKA. A disordered region spans residues 248 to 271; it reads EREVRRRQSVELHSPQSLPRGTKA. Residue S256 is modified to Phosphoserine; by PKA. The span at 261 to 271 shows a compositional bias: polar residues; it reads SPQSLPRGTKA.

The protein belongs to the MIP/aquaporin (TC 1.A.8) family. As to quaternary structure, homotetramer. Interacts with micropeptide MIAC; the interaction leads to a reduction of filamentous actin fibers and inhibition of the EREG/EGFR signaling pathway. In terms of processing, ser-256 phosphorylation is necessary and sufficient for expression at the apical membrane. Endocytosis is not phosphorylation-dependent. Post-translationally, N-glycosylated. Expressed in collecting tubules in kidney medulla (at protein level). Detected in kidney.

It localises to the apical cell membrane. Its subcellular location is the basolateral cell membrane. The protein resides in the cell membrane. It is found in the cytoplasmic vesicle membrane. The protein localises to the golgi apparatus. It localises to the trans-Golgi network membrane. The catalysed reaction is H2O(in) = H2O(out). It catalyses the reaction glycerol(in) = glycerol(out). In terms of biological role, forms a water-specific channel that provides the plasma membranes of renal collecting duct with high permeability to water, thereby permitting water to move in the direction of an osmotic gradient. Plays an essential role in renal water homeostasis. Could also be permeable to glycerol. The protein is Aquaporin-2 of Homo sapiens (Human).